The sequence spans 325 residues: GTP 3',8-cyclase (325 aa).

A Radical SAM core domain is found at 10 to 229 (GYGRRINYLR…PSLEKIKSED (220 aa)). Arg-19 lines the GTP pocket. Cys-26 and Cys-30 together coordinate [4Fe-4S] cluster. Tyr-32 lines the S-adenosyl-L-methionine pocket. Cys-33 provides a ligand contact to [4Fe-4S] cluster. Arg-69 lines the GTP pocket. Residue Gly-73 participates in S-adenosyl-L-methionine binding. GTP is bound at residue Thr-100. Ser-124 is an S-adenosyl-L-methionine binding site. Lys-161 contacts GTP. Residue Met-195 participates in S-adenosyl-L-methionine binding. Residues Cys-257 and Cys-260 each contribute to the [4Fe-4S] cluster site. Residue 262–264 (RLR) participates in GTP binding. Residue Cys-274 coordinates [4Fe-4S] cluster.

The protein belongs to the radical SAM superfamily. MoaA family. As to quaternary structure, monomer and homodimer. It depends on [4Fe-4S] cluster as a cofactor.

The enzyme catalyses GTP + AH2 + S-adenosyl-L-methionine = (8S)-3',8-cyclo-7,8-dihydroguanosine 5'-triphosphate + 5'-deoxyadenosine + L-methionine + A + H(+). It functions in the pathway cofactor biosynthesis; molybdopterin biosynthesis. In terms of biological role, catalyzes the cyclization of GTP to (8S)-3',8-cyclo-7,8-dihydroguanosine 5'-triphosphate. This chain is GTP 3',8-cyclase, found in Peptoclostridium acidaminophilum (Eubacterium acidaminophilum).